Reading from the N-terminus, the 386-residue chain is MSKNYLFTSESVSEGHPDKLADQISDAILDEILKQDKNARVACETLVKTGMALVAGEITTSAWVDIEELVRNVITETGYDNASKGIDGRTCSVINAIGKQSRDITQGVDRGSLEDLGAGDQGLMFGFATNETPTLMPSAIYYSHLLMRKQAELRKSGKLAWLRPDAKAQVTLAYENDKPKFIDTIVLSTQHNESISQKELHDAVIEEIVKKVIPNELITKDTKYHINPTGVFLIGGPQGDCGLTGRKIIVDTYGGAAHHGGGAFSGKDPSKVDRSGAYMGRYIAKNIVAAGLADKCEVQVAYAIGVAKPVSLMVNTFGTGKITDNQIEKLVAEVFDLRVGKIIENLDLLRPIYRKTSNYGHFGRELPEFTWEKIDKADILKSAARI.

Position 16 (His-16) interacts with ATP. Asp-18 is a Mg(2+) binding site. K(+) is bound at residue Glu-44. The L-methionine site is built by Glu-57 and Gln-100. The tract at residues 100–110 (QSRDITQGVDR) is flexible loop. ATP contacts are provided by residues 165-167 (DAK), Asp-240, 246-247 (RK), Ala-263, and Lys-267. Asp-240 lines the L-methionine pocket. Lys-271 is an L-methionine binding site.

The protein belongs to the AdoMet synthase family. Homotetramer; dimer of dimers. The cofactor is Mg(2+). It depends on K(+) as a cofactor.

The protein resides in the cytoplasm. The catalysed reaction is L-methionine + ATP + H2O = S-adenosyl-L-methionine + phosphate + diphosphate. It functions in the pathway amino-acid biosynthesis; S-adenosyl-L-methionine biosynthesis; S-adenosyl-L-methionine from L-methionine: step 1/1. In terms of biological role, catalyzes the formation of S-adenosylmethionine (AdoMet) from methionine and ATP. The overall synthetic reaction is composed of two sequential steps, AdoMet formation and the subsequent tripolyphosphate hydrolysis which occurs prior to release of AdoMet from the enzyme. This is S-adenosylmethionine synthase from Francisella tularensis subsp. tularensis (strain FSC 198).